The following is a 194-amino-acid chain: Adenylate kinase (194 aa).

Gly8–Thr16 lines the ATP pocket.

It belongs to the archaeal adenylate kinase family.

The protein localises to the cytoplasm. It carries out the reaction AMP + ATP = 2 ADP. This Sulfurisphaera tokodaii (strain DSM 16993 / JCM 10545 / NBRC 100140 / 7) (Sulfolobus tokodaii) protein is Adenylate kinase (adkA).